A 337-amino-acid chain; its full sequence is Inner membrane protein YhjD (337 aa).

Residues 1–29 show a composition bias toward basic and acidic residues; that stretch reads MTQENEIKRPIQDLEHEPIKPLDNSEKGS. The interval 1 to 31 is disordered; it reads MTQENEIKRPIQDLEHEPIKPLDNSEKGSKV. Topologically, residues 1–74 are cytoplasmic; it reads MTQENEIKRP…LGNQFGAAIT (74 aa). Residues 75 to 97 form a helical membrane-spanning segment; the sequence is YFSFLSMIPILMVSFAAGGFVLA. Residues 98-133 are Periplasmic-facing; it reads SHPMLLQDIFDKILQNISDPTLAATLKNTINTAVQQ. Residues 134–156 form a helical membrane-spanning segment; it reads RTTVGLVGLAVALYSGINWMGNL. At 157-185 the chain is on the cytoplasmic side; it reads REAIRAQSRDVWERSPQDQEKFWVKYLRD. A helical transmembrane segment spans residues 186 to 208; that stretch reads FISLIGLLIALIVTLSITSVAGS. Residues 209–227 lie on the Periplasmic side of the membrane; sequence AQQMIISALHLNSIEWLKP. A helical transmembrane segment spans residues 228–250; it reads TWRLIGLAISIFANYLLFFWIFW. Residues 251 to 261 lie on the Cytoplasmic side of the membrane; sequence RLPRHRPRKKA. A helical transmembrane segment spans residues 262 to 284; it reads LIRGTFLAAIGFEVIKIVMTYTL. The Periplasmic segment spans residues 285–298; that stretch reads PSLMKSPSGAAFGS. The helical transmembrane segment at 299–321 threads the bilayer; it reads VLGLMAFFYFFARLTLFCAAWIA. Over 322–337 the chain is Cytoplasmic; sequence TAEYKDDPRMPGKTQP.

Its subcellular location is the cell inner membrane. The protein is Inner membrane protein YhjD (yhjD) of Escherichia coli (strain K12).